A 340-amino-acid chain; its full sequence is Biotin synthase (340 aa).

The region spanning 56 to 283 is the Radical SAM core domain; it reads NAVQLSTLLS…KAVVRLSAGR (228 aa). Cysteine 71, cysteine 75, and cysteine 78 together coordinate [4Fe-4S] cluster. The [2Fe-2S] cluster site is built by cysteine 115, cysteine 146, cysteine 206, and arginine 278.

This sequence belongs to the radical SAM superfamily. Biotin synthase family. As to quaternary structure, homodimer. The cofactor is [4Fe-4S] cluster. Requires [2Fe-2S] cluster as cofactor.

The catalysed reaction is (4R,5S)-dethiobiotin + (sulfur carrier)-SH + 2 reduced [2Fe-2S]-[ferredoxin] + 2 S-adenosyl-L-methionine = (sulfur carrier)-H + biotin + 2 5'-deoxyadenosine + 2 L-methionine + 2 oxidized [2Fe-2S]-[ferredoxin]. Its pathway is cofactor biosynthesis; biotin biosynthesis; biotin from 7,8-diaminononanoate: step 2/2. In terms of biological role, catalyzes the conversion of dethiobiotin (DTB) to biotin by the insertion of a sulfur atom into dethiobiotin via a radical-based mechanism. The protein is Biotin synthase of Burkholderia lata (strain ATCC 17760 / DSM 23089 / LMG 22485 / NCIMB 9086 / R18194 / 383).